The sequence spans 466 residues: Glutamate--tRNA ligase (466 aa).

A 'HIGH' region motif is present at residues 10–20 (PSPTGYLHIGG). The 'KMSKS' region motif lies at 237 to 241 (RLSKR). Lysine 240 provides a ligand contact to ATP.

Belongs to the class-I aminoacyl-tRNA synthetase family. Glutamate--tRNA ligase type 1 subfamily. Monomer.

The protein localises to the cytoplasm. It catalyses the reaction tRNA(Glu) + L-glutamate + ATP = L-glutamyl-tRNA(Glu) + AMP + diphosphate. In terms of biological role, catalyzes the attachment of glutamate to tRNA(Glu) in a two-step reaction: glutamate is first activated by ATP to form Glu-AMP and then transferred to the acceptor end of tRNA(Glu). The chain is Glutamate--tRNA ligase from Syntrophotalea carbinolica (strain DSM 2380 / NBRC 103641 / GraBd1) (Pelobacter carbinolicus).